The sequence spans 283 residues: Phytanoyl-CoA dioxygenase (283 aa).

2-oxoglutarate-binding positions include Lys-99, Met-138, 153–155 (HQD), and Trp-170. Positions 153 and 155 each coordinate Fe cation. Residue His-238 coordinates Fe cation. 2 residues coordinate 2-oxoglutarate: Ser-240 and Arg-249.

Belongs to the PhyH family. Requires Fe cation as cofactor. L-ascorbate is required as a cofactor.

It catalyses the reaction phytanoyl-CoA + 2-oxoglutarate + O2 = 2-hydroxyphytanoyl-CoA + succinate + CO2. The protein operates within lipid metabolism; fatty acid metabolism. Functionally, converts phytanoyl-CoA to 2-hydroxyphytanoyl-CoA. The protein is Phytanoyl-CoA dioxygenase of Arabidopsis thaliana (Mouse-ear cress).